Consider the following 296-residue polypeptide: MNIVVLGPGAVGSLWALHLHSAGHQVALWSRQAQPTITLQLDEEAPISFRNQNLDTLIHADLLLITVKAWQVEAALQPLLPHLNRETILLFMHNGMGAVEAISESLTHFPVLFATTTHGALKATLNQVSHTGFGQTQVGPFNALGARCDFIADVFNHALAPVTWNPEIQQALWRKLAVNCAINPLTAIHQCANGALVAPEFTPIITAILDEVTAVMQAEAISGEAEALRDGVYQVIQATAANLSSMHQDVFHRRPTEIDFITGYVVRKGEQHGIATPVNSALYQQIKTLEQSWSKA.

Residues 7–12 (GPGAVG), Asn94, and Ala120 contribute to the NADP(+) site. Asn94 contributes to the substrate binding site. The Proton donor role is filled by Lys175. Residues Asn179, Asn183, Asn193, and Ser245 each coordinate substrate. Glu257 provides a ligand contact to NADP(+).

The protein belongs to the ketopantoate reductase family.

The protein resides in the cytoplasm. The enzyme catalyses (R)-pantoate + NADP(+) = 2-dehydropantoate + NADPH + H(+). It functions in the pathway cofactor biosynthesis; (R)-pantothenate biosynthesis; (R)-pantoate from 3-methyl-2-oxobutanoate: step 2/2. Functionally, catalyzes the NADPH-dependent reduction of ketopantoate into pantoic acid. The chain is 2-dehydropantoate 2-reductase (panE) from Vibrio cholerae serotype O1 (strain ATCC 39315 / El Tor Inaba N16961).